The sequence spans 546 residues: Inosine-5'-monophosphate dehydrogenase (546 aa).

CBS domains lie at 135–197 (FILD…VTAI) and 198–254 (MSTD…PLAS). NAD(+)-binding positions include 292–294 (DSS) and 342–344 (GMG). Positions 344 and 346 each coordinate K(+). Position 347 (Ser347) interacts with IMP. K(+) is bound at residue Cys349. The active-site Thioimidate intermediate is the Cys349. IMP-binding positions include 382–384 (DGG), 405–406 (GG), and 430–434 (YRGMG). Arg460 acts as the Proton acceptor in catalysis. Gln472 lines the IMP pocket. K(+) contacts are provided by Glu531 and Gly532.

It belongs to the IMPDH/GMPR family. In terms of assembly, homotetramer. Requires K(+) as cofactor.

The protein resides in the cytoplasm. It carries out the reaction IMP + NAD(+) + H2O = XMP + NADH + H(+). It functions in the pathway purine metabolism; XMP biosynthesis via de novo pathway; XMP from IMP: step 1/1. Its activity is regulated as follows. Mycophenolic acid (MPA) is a non-competitive inhibitor that prevents formation of the closed enzyme conformation by binding to the same site as the amobile flap. In contrast, mizoribine monophosphate (MZP) is a competitive inhibitor that induces the closed conformation. MPA is a potent inhibitor of mammalian IMPDHs but a poor inhibitor of the bacterial enzymes. MZP is a more potent inhibitor of bacterial IMPDH. In terms of biological role, catalyzes the conversion of inosine 5'-phosphate (IMP) to xanthosine 5'-phosphate (XMP), the first committed and rate-limiting step in the de novo synthesis of guanine nucleotides, and therefore plays an important role in the regulation of cell growth. This is Inosine-5'-monophosphate dehydrogenase from Aspergillus fumigatus (strain ATCC MYA-4609 / CBS 101355 / FGSC A1100 / Af293) (Neosartorya fumigata).